Consider the following 328-residue polypeptide: 7,8-didemethyl-8-hydroxy-5-deazariboflavin synthase (328 aa).

Positions 1–242 (MTYSRNIFIP…PDVSIQVPPN (242 aa)) constitute a Radical SAM core domain. [4Fe-4S] cluster contacts are provided by cysteine 15, cysteine 19, and cysteine 22.

The protein belongs to the radical SAM superfamily. CofG family. In terms of assembly, consists of two subunits, CofG and CofH. [4Fe-4S] cluster is required as a cofactor.

The enzyme catalyses 5-amino-5-(4-hydroxybenzyl)-6-(D-ribitylimino)-5,6-dihydrouracil + S-adenosyl-L-methionine = 7,8-didemethyl-8-hydroxy-5-deazariboflavin + 5'-deoxyadenosine + L-methionine + NH4(+) + H(+). It functions in the pathway cofactor biosynthesis; coenzyme F0 biosynthesis. Functionally, catalyzes the radical-mediated synthesis of 7,8-didemethyl-8-hydroxy-5-deazariboflavin from 5-amino-5-(4-hydroxybenzyl)-6-(D-ribitylimino)-5,6-dihydrouracil. This is 7,8-didemethyl-8-hydroxy-5-deazariboflavin synthase from Methanothermobacter thermautotrophicus (strain ATCC 29096 / DSM 1053 / JCM 10044 / NBRC 100330 / Delta H) (Methanobacterium thermoautotrophicum).